The following is a 331-amino-acid chain: Sucrose operon repressor (331 aa).

The region spanning Met1–Ala56 is the HTH lacI-type domain. A DNA-binding region (H-T-H motif) is located at residues Leu4 to His23.

In terms of biological role, repressor for the csc operon. Binds D-fructose as an inducer. The protein is Sucrose operon repressor (cscR) of Escherichia coli.